A 269-amino-acid chain; its full sequence is Protein BASIC PENTACYSTEINE3 (269 aa).

The protein belongs to the BBR/BPC family. Expressed in seedlings, leaves and pistils. Detected in the base of flowers and tips of carpels, in petal vasculature, in anthers, in young rosette, in the lateral and primary roots, and in the gynobasal portion of the ovule.

The protein localises to the nucleus. Functionally, transcriptional regulator that specifically binds to GA-rich elements (GAGA-repeats) present in regulatory sequences of genes involved in developmental processes. The chain is Protein BASIC PENTACYSTEINE3 (BPC3) from Arabidopsis thaliana (Mouse-ear cress).